Consider the following 160-residue polypeptide: S-ribosylhomocysteine lyase (160 aa).

Fe cation contacts are provided by histidine 57, histidine 61, and cysteine 127.

Belongs to the LuxS family. As to quaternary structure, homodimer. The cofactor is Fe cation.

It carries out the reaction S-(5-deoxy-D-ribos-5-yl)-L-homocysteine = (S)-4,5-dihydroxypentane-2,3-dione + L-homocysteine. In terms of biological role, involved in the synthesis of autoinducer 2 (AI-2) which is secreted by bacteria and is used to communicate both the cell density and the metabolic potential of the environment. The regulation of gene expression in response to changes in cell density is called quorum sensing. Catalyzes the transformation of S-ribosylhomocysteine (RHC) to homocysteine (HC) and 4,5-dihydroxy-2,3-pentadione (DPD). This Streptococcus suis (strain 98HAH33) protein is S-ribosylhomocysteine lyase.